The sequence spans 74 residues: Small ribosomal subunit protein bS18 (74 aa).

It belongs to the bacterial ribosomal protein bS18 family. As to quaternary structure, part of the 30S ribosomal subunit. Forms a tight heterodimer with protein bS6.

Binds as a heterodimer with protein bS6 to the central domain of the 16S rRNA, where it helps stabilize the platform of the 30S subunit. This chain is Small ribosomal subunit protein bS18, found in Rhizorhabdus wittichii (strain DSM 6014 / CCUG 31198 / JCM 15750 / NBRC 105917 / EY 4224 / RW1) (Sphingomonas wittichii).